A 1165-amino-acid chain; its full sequence is Protein hsr-9 (1165 aa).

Disordered regions lie at residues 1–26, 70–578, 608–713, and 874–913; these read MASS…PTTT, AEDE…TEME, KYSM…IPLK, and TRAR…EEEE. Residues 16-26 are compositionally biased toward low complexity; that stretch reads TVTQTSLPTTT. 3 stretches are compositionally biased toward basic and acidic residues: residues 98–114, 123–140, and 149–162; these read KDAK…KSES, TFEK…KLDI, and DTEK…KVVG. 3 stretches are compositionally biased toward acidic residues: residues 163-179, 211-230, and 280-289; these read DEDE…DEDE, EKEE…EVEV, and GESEANEENQ. Polar residues predominate over residues 306-317; that stretch reads ATVSSTPSSNTP. The span at 397–408 shows a compositional bias: basic and acidic residues; sequence NTEHPTEEETPK. Positions 415-431 are enriched in low complexity; that stretch reads SAASSSATSSAVPTPRS. Positions 446–461 are enriched in basic and acidic residues; sequence LQEKETEDPTKTHDTN. Residues 533–543 show a composition bias toward acidic residues; it reads DPIEEADETIE. The span at 554–563 shows a compositional bias: low complexity; sequence AAKSAPSSSK. Composition is skewed to basic and acidic residues over residues 662–671 and 694–708; these read KKEEEHHEND and SEAS…KKEP. Residues 923–1028 form the BRCT domain; it reads IGKNIFTGKV…KCVDYTDYVL (106 aa).

Expressed in germ cells.

Its subcellular location is the nucleus. Its function is as follows. May have a role in DNA double-strand break repair following gamma-irradiation. This Caenorhabditis elegans protein is Protein hsr-9.